The sequence spans 74 residues: U2-sicaritoxin-Sdo1a (74 aa).

The first 20 residues, 1–20 (MKLSFCFFLCAIVLFSFAEA), serve as a signal peptide directing secretion. A propeptide spanning residues 21–39 (RINPNQLKRLRELVRDDEP) is cleaved from the precursor. Cystine bridges form between cysteine 42-cysteine 59, cysteine 49-cysteine 62, and cysteine 58-cysteine 71.

As to expression, expressed by the venom gland.

The protein resides in the secreted. The sequence is that of U2-sicaritoxin-Sdo1a from Hexophthalma dolichocephala (Afrotropical spider).